An 809-amino-acid polypeptide reads, in one-letter code: WD repeat protein iqw1 (809 aa).

WD repeat units lie at residues 43-82, 87-128, 141-180, 193-233, and 241-295; these read GHTG…KPRH, GHVQ…EGGM, CALD…VCNQ, PYRI…KSFR, and SPEK…LFHV. A disordered region spans residues 599–644; sequence SMYTGHSDLNDDDDDYQDEESYSYASDDDDESDEDSDEGPTLLSLR. A compositionally biased stretch (acidic residues) spans 608-636; it reads NDDDDDYQDEESYSYASDDDDESDEDSDE. 2 WD repeats span residues 668–708 and 711–750; these read CNVE…ILAI and GDSE…PSGC.

In terms of assembly, interacts with ddb1.

The protein localises to the cytoplasm. Ligand-dependent coactivator of nuclear receptors that may function as a substrate receptor for CUL4-DDB1 E3 ubiquitin-protein ligase complex. The protein is WD repeat protein iqw1 (iqw1) of Schizosaccharomyces pombe (strain 972 / ATCC 24843) (Fission yeast).